Here is a 550-residue protein sequence, read N- to C-terminus: Dipeptide-binding protein (550 aa).

Positions 1 to 22 are cleaved as a signal peptide; sequence MKQAKIIGLSTVIALSGIILVA. Cys23 carries N-palmitoyl cysteine lipidation. Residue Cys23 is the site of S-diacylglycerol cysteine attachment.

It belongs to the bacterial solute-binding protein 5 family. The complex is composed of two ATP-binding proteins (DppD and DppF), two transmembrane proteins (DppB and DppC) and a solute-binding protein (DppA).

The protein localises to the cell membrane. Its function is as follows. Part of the ABC transporter DppABCDF involved in dipeptide transport. Binds di- and tripeptides with high affinity. Requires a free N-terminal alpha-amino group and an alpha-peptide bound contiguous with the N-terminal amino group, has a strong selectivity for L-residues, and shows preference for dipeptides containing methionine or arginine, followed by hydrophobic tripeptides consisting of leucine or valine residues. This chain is Dipeptide-binding protein, found in Lactococcus lactis subsp. cremoris (strain MG1363).